A 146-amino-acid polypeptide reads, in one-letter code: 3-dehydroquinate dehydratase (146 aa).

Catalysis depends on Tyr22, which acts as the Proton acceptor. Substrate is bound by residues Asn74, His80, and Asp87. His100 acts as the Proton donor in catalysis. Substrate is bound by residues 101-102 (LS) and Arg111.

Belongs to the type-II 3-dehydroquinase family. In terms of assembly, homododecamer.

It carries out the reaction 3-dehydroquinate = 3-dehydroshikimate + H2O. It functions in the pathway metabolic intermediate biosynthesis; chorismate biosynthesis; chorismate from D-erythrose 4-phosphate and phosphoenolpyruvate: step 3/7. Its function is as follows. Catalyzes a trans-dehydration via an enolate intermediate. This is 3-dehydroquinate dehydratase from Clostridium perfringens (strain SM101 / Type A).